The following is a 265-amino-acid chain: Palmitoyltransferase ZDHHC21 (265 aa).

Residues 1–16 (MGLRIHFVVDPHGWCC) are Cytoplasmic-facing. The helical transmembrane segment at 17-37 (MGLIVFVWLYNIVIIPKIVLF) threads the bilayer. Topologically, residues 38–44 (PHYEEGH) are extracellular. Residues 45 to 65 (IPGILIIIFYGISIFCLVALV) traverse the membrane as a helical segment. The Cytoplasmic segment spans residues 66-133 (RASLTDPGRL…NNCVGEDNHW (68 aa)). Residues 90–140 (ELCNKCNLMRPKRSHHCSRCGHCVRRMDHHCPWINNCVGEDNHWLFLQLCF) form the DHHC domain. Residue Cys-120 is the S-palmitoyl cysteine intermediate of the active site. Residues 134–154 (LFLQLCFYTELLTCYALMFSF) traverse the membrane as a helical segment. The Extracellular segment spans residues 155 to 185 (CHYYYFLPLKKRNLDLFVVRHELAIMRLAAF). The chain crosses the membrane as a helical span at residues 186 to 206 (MGITMLVGITGLFYTQLIGII). The Cytoplasmic portion of the chain corresponds to 207 to 265 (TDTTSIEKMSNCCEEISRPRKPWQQTFSEVFGTRWKILWFIPFRQRQPLRVPYHFANHV).

Belongs to the DHHC palmitoyltransferase family. As to expression, widely expressed. Expressed in Henle's layer within the hair bulb and the hair shaft cuticle (at protein level). Expression is limited to the post-mitotic lineages of inner root sheath (IRS) and cuticle.

It localises to the golgi apparatus membrane. Its subcellular location is the golgi apparatus. The protein localises to the cis-Golgi network membrane. It is found in the cell membrane. The catalysed reaction is L-cysteinyl-[protein] + hexadecanoyl-CoA = S-hexadecanoyl-L-cysteinyl-[protein] + CoA. Palmitoyltransferase that catalyzes the addition of palmitate onto various protein substrates. Palmitoylates sex steroid hormone receptors, including ESR1, PGR and AR, thereby regulating their targeting to the plasma membrane. This affects rapid intracellular signaling by sex hormones via ERK and AKT kinases and the generation of cAMP, but does not affect that mediated by their nuclear receptor. Palmitoylates FYN, regulates its localization in hair follicles and plays a key role in epidermal homeostasis and hair follicle differentiation. Through the palmitoylation of PLCB1 and the regulation of PLCB1 downstream signaling may indirectly regulate the function of the endothelial barrier and the adhesion of leukocytes to the endothelium. Also has a palmitoyltransferase activity toward ADRA1D, positively regulating its activity and expression and may thereby play a role in vascular contraction. May also palmitoylate eNOS and LCK. In Mus musculus (Mouse), this protein is Palmitoyltransferase ZDHHC21.